The following is a 263-amino-acid chain: Small ribosomal subunit protein eS4 (263 aa).

Residues 42 to 104 (LPLVIFLRNR…TNELFRLIYD (63 aa)) form the S4 RNA-binding domain.

Belongs to the eukaryotic ribosomal protein eS4 family.

The sequence is that of Small ribosomal subunit protein eS4 (RpS4) from Bombyx mori (Silk moth).